The following is a 244-amino-acid chain: Inner kinetochore subunit fta7 (244 aa).

It belongs to the CENP-Q/OKP1 family. In terms of assembly, component of the heterotetrameric kinetochore subcomplex COMA, which consists of fta2, fta7, mal2 and mis17. The COMA subcomplex is part of a larger constitutive centromere-associated network (CCAN) (also known as central kinetochore Sim4 complex in fission yeast), which is composed of at least cnl2, cnp3, cnp20, fta1, fta2, fta3, fta4, fta6, fta7, mal2, mhf1, mhf2, mis6, mis15, mis17, sim4 and wip1.

The protein resides in the nucleus. The protein localises to the chromosome. Its subcellular location is the centromere. It localises to the kinetochore. It is found in the cytoplasm. The protein resides in the cytoskeleton. The protein localises to the microtubule organizing center. Its subcellular location is the spindle pole body. Component of the kinetochore, a multiprotein complex that assembles on centromeric DNA and attaches chromosomes to spindle microtubules, mediating chromosome segregation and sister chromatid segregation during meiosis and mitosis. Component of the inner kinetochore COMA complex, which connects centromere-associated proteins and the outer kinetochore. COMA interacts with other inner kinetochore proteins to form the inner kinetochore constitutive centromere-associated network (CCAN), which serves as a structural platform for outer kinetochore assembly. The chain is Inner kinetochore subunit fta7 (fta7) from Schizosaccharomyces pombe (strain 972 / ATCC 24843) (Fission yeast).